Consider the following 421-residue polypeptide: Acylglycerol kinase, mitochondrial (421 aa).

K6 carries the post-translational modification N6-acetyllysine. Positions 15-31 (TTAGLCLLTWGGHWLYG) are hydrophobic. Positions 58–199 (AQVKKATVFL…LDVLQIKGEK (142 aa)) constitute a DAGKc domain. The tract at residues 252 to 271 (ISYTGPRERPPIEPEETPPR) is disordered.

Belongs to the AGK family. As to quaternary structure, component of the TIM22 complex, which core is composed of TIMM22, associated with TIMM10 (TIMM10A and/or TIMM10B), TIMM9, AGK and TIMM29. Interacts with SMIM26. Mg(2+) serves as cofactor. Ubiquitously expressed.

The protein localises to the mitochondrion inner membrane. It is found in the mitochondrion intermembrane space. It carries out the reaction a monoacylglycerol + ATP = a monoacyl-sn-glycero-3-phosphate + ADP + H(+). It catalyses the reaction a 1,2-diacyl-sn-glycerol + ATP = a 1,2-diacyl-sn-glycero-3-phosphate + ADP + H(+). The catalysed reaction is an N-acylsphing-4-enine + ATP = an N-acylsphing-4-enine 1-phosphate + ADP + H(+). The enzyme catalyses 1,2-di-(9Z-octadecenoyl)-sn-glycerol + ATP = 1,2-di-(9Z-octadecenoyl)-sn-glycero-3-phosphate + ADP + H(+). It carries out the reaction 1-(9Z-octadecenoyl)-sn-glycerol + ATP = 1-(9Z-octadecenoyl)-sn-glycero-3-phosphate + ADP + H(+). It catalyses the reaction 1-(5Z,8Z,11Z,14Z-eicosatetraenoyl)-sn-glycerol + ATP = 1-(5Z,8Z,11Z,14Z-eicosatetraenoyl)-sn-glycero-3-phosphate + ADP + H(+). The catalysed reaction is a 1-acyl-sn-glycerol + ATP = a 1-acyl-sn-glycero-3-phosphate + ADP + H(+). The enzyme catalyses 1-hexadecanoyl-sn-glycerol + ATP = 1-hexadecanoyl-sn-glycero-3-phosphate + ADP + H(+). It carries out the reaction a 2-acylglycerol + ATP = a 2-acyl-sn-glycerol 3-phosphate + ADP + H(+). It catalyses the reaction 2-(5Z,8Z,11Z,14Z-eicosatetraenoyl)-glycerol + ATP = 2-(5Z,8Z,11Z,14Z-eicosatetraenoyl)-sn-glycero-3-phosphate + ADP + H(+). The catalysed reaction is N-(hexanoyl)sphing-4-enine + ATP = N-hexanoylsphing-4-enine 1-phosphate + ADP + H(+). It functions in the pathway lipid metabolism; glycerolipid metabolism. Both the ceramide and diacylglycerol kinase activities are inhibited by sphingosine and stimulated by cardiolipin. Both activities are stimulated by calcium when magnesium concentrations are low but inhibited by calcium when magnesium concentrations are high. Lipid kinase that can phosphorylate both monoacylglycerol and diacylglycerol to form lysophosphatidic acid (LPA) and phosphatidic acid (PA), respectively. Phosphorylates ceramide but not sphingosine. Phosphorylates 1,2-dioleoylglycerol more rapidly than 2,3-dioleoylglycerol. Independently of its lipid kinase activity, acts as a component of the TIM22 complex. The TIM22 complex mediates the import and insertion of multi-pass transmembrane proteins into the mitochondrial inner membrane by forming a twin-pore translocase that uses the membrane potential as the external driving force. In the TIM22 complex, required for the import of a subset of metabolite carriers into mitochondria, such as ANT1/SLC25A4 and SLC25A24, while it is not required for the import of TIMM23. Overexpression increases the formation and secretion of LPA, resulting in transactivation of EGFR and activation of the downstream MAPK signaling pathway, leading to increased cell growth. This is Acylglycerol kinase, mitochondrial from Mus musculus (Mouse).